Reading from the N-terminus, the 197-residue chain is 3-isopropylmalate dehydratase small subunit (197 aa).

This sequence belongs to the LeuD family. LeuD type 1 subfamily. In terms of assembly, heterodimer of LeuC and LeuD.

The enzyme catalyses (2R,3S)-3-isopropylmalate = (2S)-2-isopropylmalate. The protein operates within amino-acid biosynthesis; L-leucine biosynthesis; L-leucine from 3-methyl-2-oxobutanoate: step 2/4. In terms of biological role, catalyzes the isomerization between 2-isopropylmalate and 3-isopropylmalate, via the formation of 2-isopropylmaleate. The sequence is that of 3-isopropylmalate dehydratase small subunit (leuD) from Streptomyces coelicolor (strain ATCC BAA-471 / A3(2) / M145).